A 1823-amino-acid polypeptide reads, in one-letter code: Bromodomain-containing protein DDB_G0280777 (1823 aa).

Disordered regions lie at residues 44-83 and 200-281; these read DNNN…EEDE and LKQT…RTTS. The span at 65 to 77 shows a compositional bias: basic and acidic residues; that stretch reads SNKEEEKEEKEEK. Positions 210–224 are enriched in basic residues; that stretch reads KRRNQQHQNLLKKQK. Positions 225–250 are enriched in basic and acidic residues; the sequence is IQKEKEEREQKEKEQKEKEQKEKEEQ. Over residues 251 to 262 the composition is skewed to low complexity; sequence QQQLFLLQQQQQ. A Bromo domain is found at 306–413; that stretch reads EAQEEMYDQL…KKSKDLMKNV (108 aa). Disordered regions lie at residues 429–654, 753–781, 855–886, 949–993, 1055–1079, 1190–1386, 1453–1477, and 1679–1823; these read ENKN…EEQT, NCNN…NNSL, INDN…NNKP, NSSK…DEDF, LPNN…PPPS, IDPK…IQAS, QLQQ…QTPQ, and QQQQ…QKKQ. 4 stretches are compositionally biased toward low complexity: residues 432-486, 494-511, 520-555, and 570-579; these read NNNN…NTPL, CSPS…TPQS, QQQQ…ISPR, and SSSSLSSSSL. The span at 580 to 590 shows a compositional bias: polar residues; that stretch reads ALNSQNENGVN. Residues 601–614 are compositionally biased toward basic and acidic residues; sequence MESEESTNVKKEEN. Acidic residues predominate over residues 631–643; that stretch reads EGEEQQEQEDEEQ. Composition is skewed to low complexity over residues 753–779, 863–884, 949–958, 1055–1071, and 1205–1378; these read NCNN…NNNN, NNNN…NNNN, NSSKSNNNSN, and LPNN…TTQL. Over residues 1679-1705 the composition is skewed to low complexity; that stretch reads QQQQPQQQQQQPQQQPQQQPQQQQQPQ. Composition is skewed to basic and acidic residues over residues 1716–1737 and 1744–1755; these read PKEK…EKDR and KTESKKESKKSL. Composition is skewed to low complexity over residues 1756–1767 and 1789–1806; these read NDSSNSDINTSV and SSKQ…TQDS. Basic residues predominate over residues 1813-1823; sequence KKKRGRPQKKQ.

This is Bromodomain-containing protein DDB_G0280777 from Dictyostelium discoideum (Social amoeba).